Reading from the N-terminus, the 448-residue chain is Probable glycine dehydrogenase (decarboxylating) subunit 1 (448 aa).

Belongs to the GcvP family. N-terminal subunit subfamily. In terms of assembly, the glycine cleavage system is composed of four proteins: P, T, L and H. In this organism, the P 'protein' is a heterodimer of two subunits.

It carries out the reaction N(6)-[(R)-lipoyl]-L-lysyl-[glycine-cleavage complex H protein] + glycine + H(+) = N(6)-[(R)-S(8)-aminomethyldihydrolipoyl]-L-lysyl-[glycine-cleavage complex H protein] + CO2. In terms of biological role, the glycine cleavage system catalyzes the degradation of glycine. The P protein binds the alpha-amino group of glycine through its pyridoxal phosphate cofactor; CO(2) is released and the remaining methylamine moiety is then transferred to the lipoamide cofactor of the H protein. The chain is Probable glycine dehydrogenase (decarboxylating) subunit 1 from Listeria welshimeri serovar 6b (strain ATCC 35897 / DSM 20650 / CCUG 15529 / CIP 8149 / NCTC 11857 / SLCC 5334 / V8).